Consider the following 235-residue polypeptide: MLTLLAILAVSYLIGSIPTGIMAGKMLKGIDIRKFGSGNAGGTNAFRVLGWKTGLTVTLIDIIKGVVAAVSVVAFFRHHPIDVFPDINEVALRLLAGMSAVVGHVFTVFAGFKGGKGVSTAAGMLIGIAPVSMLMVIGIFLLTIYLSRYVSVASMLAAVAFPLIIAIRKYIFELGSGLDYYIKLFGEQLSFHDSLDYHLMIFGLIVALGILYTHRANIRRLLSGTENRVTFGKHS.

6 helical membrane passes run 4–24, 56–76, 94–114, 124–144, 152–172, and 191–211; these read LLAI…IMAG, TVTL…VAFF, LLAG…GFKG, MLIG…LLTI, VASM…KYIF, and FHDS…LGIL.

The protein belongs to the PlsY family. In terms of assembly, probably interacts with PlsX.

Its subcellular location is the cell inner membrane. The catalysed reaction is an acyl phosphate + sn-glycerol 3-phosphate = a 1-acyl-sn-glycero-3-phosphate + phosphate. The protein operates within lipid metabolism; phospholipid metabolism. In terms of biological role, catalyzes the transfer of an acyl group from acyl-phosphate (acyl-PO(4)) to glycerol-3-phosphate (G3P) to form lysophosphatidic acid (LPA). This enzyme utilizes acyl-phosphate as fatty acyl donor, but not acyl-CoA or acyl-ACP. The polypeptide is Glycerol-3-phosphate acyltransferase (Chlorobium limicola (strain DSM 245 / NBRC 103803 / 6330)).